Reading from the N-terminus, the 39-residue chain is MQVNENPNKVPVELNRTSLYLGLLSVFVLGILFSSYFFN.

Residues 18-38 (SLYLGLLSVFVLGILFSSYFF) traverse the membrane as a helical segment.

It belongs to the PsbL family. PSII is composed of 1 copy each of membrane proteins PsbA, PsbB, PsbC, PsbD, PsbE, PsbF, PsbH, PsbI, PsbJ, PsbK, PsbL, PsbM, PsbT, PsbX, PsbY, Psb30/Ycf12, peripheral proteins PsbO, CyanoQ (PsbQ), PsbU, PsbV and a large number of cofactors. It forms dimeric complexes.

It is found in the cellular thylakoid membrane. In terms of biological role, one of the components of the core complex of photosystem II (PSII). PSII is a light-driven water:plastoquinone oxidoreductase that uses light energy to abstract electrons from H(2)O, generating O(2) and a proton gradient subsequently used for ATP formation. It consists of a core antenna complex that captures photons, and an electron transfer chain that converts photonic excitation into a charge separation. This subunit is found at the monomer-monomer interface and is required for correct PSII assembly and/or dimerization. The sequence is that of Photosystem II reaction center protein L from Prochlorococcus marinus (strain MIT 9301).